A 165-amino-acid polypeptide reads, in one-letter code: Anaerobic nitrite reductase GLB1 (165 aa).

One can recognise a Globin domain in the interval 12-162 (VFGEEQEALV…LVAAIKREMK (151 aa)). The short motif at 45 to 49 (EIAPS) is the Homodimerization element. Heme b contacts are provided by S55, K69, H73, R103, T107, and H108. The short motif at 115–127 (DGHFEVTGFALLE) is the Homodimerization element.

Belongs to the plant globin family. As to quaternary structure, homodimer. Requires heme b as cofactor. As to expression, in embryonic organs and at low levels in vegetative organs.

The protein localises to the cytoplasm. Its subcellular location is the nucleus. It catalyses the reaction Fe(III)-heme b-[protein] + nitric oxide + H2O = Fe(II)-heme b-[protein] + nitrite + 2 H(+). Phytoglobin that reduces nitrite to nitric oxide (NO) under anoxic conditions (e.g. during flooding or in waterlogged soil). May not function as an oxygen storage or transport protein. Has an unusually high affinity for O(2) through an hexacoordinate heme iron because of a very low dissociation constant. This is Anaerobic nitrite reductase GLB1 (HB) from Zea mays (Maize).